Reading from the N-terminus, the 2324-residue chain is Acetyl-CoA carboxylase (2324 aa).

N-acetylmethionine is present on M1. Positions M1–S34 are disordered. Phosphoserine is present on residues S78 and S80. One can recognise a Biotin carboxylation domain in the interval V117–A618. The ATP-grasp domain occupies Q275 to M466. G315 to G320 contributes to the ATP binding site. E424, E437, and N439 together coordinate Mn(2+). R441 is a catalytic residue. Residues F745 to Q819 enclose the Biotinyl-binding domain. K786 bears the N6-biotinyllysine mark. S1193 carries the post-translational modification Phosphoserine. Residues P1553–K1891 enclose the CoA carboxyltransferase N-terminal domain. The segment at P1553–D2211 is carboxyltransferase. Residues R1800, K2104, and R2106 each contribute to the CoA site. One can recognise a CoA carboxyltransferase C-terminal domain in the interval P1895–D2211.

Biotin is required as a cofactor. The cofactor is Mn(2+).

The protein localises to the cytoplasm. It catalyses the reaction hydrogencarbonate + acetyl-CoA + ATP = malonyl-CoA + ADP + phosphate + H(+). It carries out the reaction N(6)-biotinyl-L-lysyl-[protein] + hydrogencarbonate + ATP = N(6)-carboxybiotinyl-L-lysyl-[protein] + ADP + phosphate + H(+). It functions in the pathway lipid metabolism; malonyl-CoA biosynthesis; malonyl-CoA from acetyl-CoA: step 1/1. With respect to regulation, by phosphorylation. In terms of biological role, catalyzes the rate-limiting reaction in the biogenesis of long-chain fatty acids. Carries out three functions: biotin carboxyl carrier protein, biotin carboxylase and carboxyltransferase. This chain is Acetyl-CoA carboxylase (ACAC), found in Gallus gallus (Chicken).